The chain runs to 861 residues: Leucine--tRNA ligase (861 aa).

Positions 42–52 match the 'HIGH' region motif; sequence PYPSGRLHMGH. Residues 619–623 carry the 'KMSKS' region motif; it reads KMSKS. Lys622 contacts ATP.

It belongs to the class-I aminoacyl-tRNA synthetase family.

Its subcellular location is the cytoplasm. The catalysed reaction is tRNA(Leu) + L-leucine + ATP = L-leucyl-tRNA(Leu) + AMP + diphosphate. This chain is Leucine--tRNA ligase, found in Haemophilus influenzae (strain PittEE).